The following is a 138-amino-acid chain: Large ribosomal subunit protein uL16 (138 aa).

The segment covering 1–17 (MLQPKRTKFRKQHKGRN) has biased composition (basic residues). Residues 1 to 22 (MLQPKRTKFRKQHKGRNRGVAT) form a disordered region.

This sequence belongs to the universal ribosomal protein uL16 family. In terms of assembly, part of the 50S ribosomal subunit.

Binds 23S rRNA and is also seen to make contacts with the A and possibly P site tRNAs. This is Large ribosomal subunit protein uL16 from Acidithiobacillus ferrooxidans (strain ATCC 23270 / DSM 14882 / CIP 104768 / NCIMB 8455) (Ferrobacillus ferrooxidans (strain ATCC 23270)).